The primary structure comprises 938 residues: ATP-dependent 6-phosphofructokinase subunit beta (938 aa).

Residues 1-552 (MTQSLPLLNG…HLDNFMAINS (552 aa)) are N-terminal catalytic PFK domain 1. ATP is bound by residues G185, 249 to 250 (RC), and 279 to 282 (GDGS). D280 serves as a coordination point for Mg(2+). Beta-D-fructose 6-phosphate contacts are provided by residues 325-327 (SID), R362, 369-371 (MGR), E426, R454, and 460-463 (HVQR). Residue D327 is the Proton acceptor of the active site. The tract at residues 553-566 (ADHIEPKLPEHTHM) is interdomain linker. Residues 567–938 (KIAIVNVGAP…ADHLVGRKKL (372 aa)) are C-terminal regulatory PFK domain 2. Beta-D-fructose 2,6-bisphosphate is bound by residues R637, 695 to 699 (TLSNN), R733, 740 to 742 (QGG), K826, 832 to 835 (HVQQ), and R915.

The protein belongs to the phosphofructokinase type A (PFKA) family. ATP-dependent PFK group I subfamily. Eukaryotic two domain clade 'E' sub-subfamily. Heterooctamer of 4 alpha and 4 beta chains. It depends on Mg(2+) as a cofactor.

Its subcellular location is the cytoplasm. It carries out the reaction beta-D-fructose 6-phosphate + ATP = beta-D-fructose 1,6-bisphosphate + ADP + H(+). It functions in the pathway carbohydrate degradation; glycolysis; D-glyceraldehyde 3-phosphate and glycerone phosphate from D-glucose: step 3/4. With respect to regulation, allosterically activated by ADP, AMP, or fructose 2,6-bisphosphate, and allosterically inhibited by ATP or citrate. In terms of biological role, catalyzes the phosphorylation of D-fructose 6-phosphate to fructose 1,6-bisphosphate by ATP, the first committing step of glycolysis. The protein is ATP-dependent 6-phosphofructokinase subunit beta (PFK2) of Kluyveromyces lactis (strain ATCC 8585 / CBS 2359 / DSM 70799 / NBRC 1267 / NRRL Y-1140 / WM37) (Yeast).